Reading from the N-terminus, the 599-residue chain is Aspartate--tRNA(Asp/Asn) ligase (599 aa).

Residue glutamate 183 participates in L-aspartate binding. The tract at residues 207–210 (QIFK) is aspartate. Position 229 (arginine 229) interacts with L-aspartate. Residues 229-231 (RDE) and glutamine 238 contribute to the ATP site. Histidine 456 serves as a coordination point for L-aspartate. ATP is bound at residue glutamate 490. An L-aspartate-binding site is contributed by arginine 497. 542–545 (GLDR) provides a ligand contact to ATP.

Belongs to the class-II aminoacyl-tRNA synthetase family. Type 1 subfamily. Homodimer.

Its subcellular location is the cytoplasm. It carries out the reaction tRNA(Asx) + L-aspartate + ATP = L-aspartyl-tRNA(Asx) + AMP + diphosphate. Its function is as follows. Aspartyl-tRNA synthetase with relaxed tRNA specificity since it is able to aspartylate not only its cognate tRNA(Asp) but also tRNA(Asn). Reaction proceeds in two steps: L-aspartate is first activated by ATP to form Asp-AMP and then transferred to the acceptor end of tRNA(Asp/Asn). The polypeptide is Aspartate--tRNA(Asp/Asn) ligase (Protochlamydia amoebophila (strain UWE25)).